A 213-amino-acid polypeptide reads, in one-letter code: tRNA (guanine-N(7)-)-methyltransferase (213 aa).

Residues Asp40, Glu65, Asn92, and Asp118 each coordinate S-adenosyl-L-methionine. The active site involves Asp118. Substrate contacts are provided by Lys122 and Asp154.

It belongs to the class I-like SAM-binding methyltransferase superfamily. TrmB family.

It catalyses the reaction guanosine(46) in tRNA + S-adenosyl-L-methionine = N(7)-methylguanosine(46) in tRNA + S-adenosyl-L-homocysteine. It participates in tRNA modification; N(7)-methylguanine-tRNA biosynthesis. Its function is as follows. Catalyzes the formation of N(7)-methylguanine at position 46 (m7G46) in tRNA. This is tRNA (guanine-N(7)-)-methyltransferase from Synechococcus elongatus (strain ATCC 33912 / PCC 7942 / FACHB-805) (Anacystis nidulans R2).